The chain runs to 190 residues: Translation initiation factor IF-3 (190 aa).

It belongs to the IF-3 family. As to quaternary structure, monomer.

The protein resides in the cytoplasm. In terms of biological role, IF-3 binds to the 30S ribosomal subunit and shifts the equilibrium between 70S ribosomes and their 50S and 30S subunits in favor of the free subunits, thus enhancing the availability of 30S subunits on which protein synthesis initiation begins. In Prochlorococcus marinus (strain MIT 9301), this protein is Translation initiation factor IF-3.